The following is a 197-amino-acid chain: UPF0319 protein VP0761 (197 aa).

Residues 1–20 (MKKTTTLLGICAILSAPAFA) form the signal peptide.

Belongs to the UPF0319 family.

This Vibrio parahaemolyticus serotype O3:K6 (strain RIMD 2210633) protein is UPF0319 protein VP0761.